The following is a 231-amino-acid chain: 5'-methylthioadenosine/S-adenosylhomocysteine nucleosidase (231 aa).

Residue Glu-12 is the Proton acceptor of the active site. Residues Gly-78, Val-153, and Met-174–Glu-175 each bind substrate. Asp-198 serves as the catalytic Proton donor.

The protein belongs to the PNP/UDP phosphorylase family. MtnN subfamily.

The enzyme catalyses S-adenosyl-L-homocysteine + H2O = S-(5-deoxy-D-ribos-5-yl)-L-homocysteine + adenine. The catalysed reaction is S-methyl-5'-thioadenosine + H2O = 5-(methylsulfanyl)-D-ribose + adenine. It catalyses the reaction 5'-deoxyadenosine + H2O = 5-deoxy-D-ribose + adenine. Its pathway is amino-acid biosynthesis; L-methionine biosynthesis via salvage pathway; S-methyl-5-thio-alpha-D-ribose 1-phosphate from S-methyl-5'-thioadenosine (hydrolase route): step 1/2. Its function is as follows. Catalyzes the irreversible cleavage of the glycosidic bond in both 5'-methylthioadenosine (MTA) and S-adenosylhomocysteine (SAH/AdoHcy) to adenine and the corresponding thioribose, 5'-methylthioribose and S-ribosylhomocysteine, respectively. Also cleaves 5'-deoxyadenosine, a toxic by-product of radical S-adenosylmethionine (SAM) enzymes, into 5-deoxyribose and adenine. This Vibrio vulnificus (strain YJ016) protein is 5'-methylthioadenosine/S-adenosylhomocysteine nucleosidase.